Here is a 344-residue protein sequence, read N- to C-terminus: Heme A synthase (344 aa).

Helical transmembrane passes span 20-40 (IAWWLIGVAALVFIMVVVGGL), 104-124 (RFLGRLIGLAFFVPFVFFVVT), 135-155 (LIFLFVLGGMQGVLGWWMVMS), 170-190 (AHLGLATLIFGALIWTALDLL), 205-225 (AAAILALIFLQTILGAFVAGI), 233-253 (TWPLMAGAFIPDGLFAMTPVW), 265-285 (FQHRMTAYLLLLCVVWHWWAA), 296-316 (WLAVATFAQACIGIWTVLWVV), and 317-337 (PIPLGAAHQAGAMVVFGVAVW). Heme is bound at residue His-267. Residue His-324 participates in heme binding.

The protein belongs to the COX15/CtaA family. Type 2 subfamily. In terms of assembly, interacts with CtaB. Heme b is required as a cofactor.

The protein resides in the cell membrane. It carries out the reaction Fe(II)-heme o + 2 A + H2O = Fe(II)-heme a + 2 AH2. The protein operates within porphyrin-containing compound metabolism; heme A biosynthesis; heme A from heme O: step 1/1. Its function is as follows. Catalyzes the conversion of heme O to heme A by two successive hydroxylations of the methyl group at C8. The first hydroxylation forms heme I, the second hydroxylation results in an unstable dihydroxymethyl group, which spontaneously dehydrates, resulting in the formyl group of heme A. The sequence is that of Heme A synthase from Parvibaculum lavamentivorans (strain DS-1 / DSM 13023 / NCIMB 13966).